The chain runs to 141 residues: Galactose-6-phosphate isomerase subunit LacA (141 aa).

This sequence belongs to the LacAB/RpiB family. In terms of assembly, heteromultimeric protein consisting of LacA and LacB.

The enzyme catalyses aldehydo-D-galactose 6-phosphate = keto-D-tagatose 6-phosphate. It participates in carbohydrate metabolism; D-galactose 6-phosphate degradation; D-tagatose 6-phosphate from D-galactose 6-phosphate: step 1/1. This Streptococcus agalactiae serotype Ia (strain ATCC 27591 / A909 / CDC SS700) protein is Galactose-6-phosphate isomerase subunit LacA.